The primary structure comprises 778 residues: MATLPVLPLTDAVLLPGMAIPVTLDPTTQAAVDAARATGDQRLLAVPRLDGEYGPVGVVATIEKVGRLPSGEPAAVVRGLARARIGSGVPGPGAALWVEAAELAEPAPAGRARELAREYRALMTSVLQQRGAWQVIDAIERMTDLSELADSAGYVSWLSLAQKTELLAAPDVTTRLELLVGWVRAHLAEQEVAEQINTDVREGLEKSQREFLLRQQLATIRKELGEDEPEGSADYRARVEAADLPAPVRDAALREVGKLERASDASPEAGWIRTWLDTVLEMPWNTRTEDNTDLVAARAVLDADHAGLTDVKDRILEYLAVRNRRVERNLGVVGGRGSGAVLALAGPPGVGKTSLGESVARALGRRFVRVSLGGVRDEAEIRGHRRTYVGALPGRIVRALREAGSMNPVVLLDEVDKLAVGYSGDPAAALLEVLDPAQNHTFRDHYLEVDLDLSDVLFLATANVVEAIPSPLLDRMELVTLDGYTEDEKVAIARDHLLPRQRERAGLTADEVTISDGVLARIAGEYTREAGVRQLERSLAKIFRKVAVTATTDPAPVHVDTGNLHRYLGRPKFSPESAERTAVPGVATGLAVTGAGGDVLFVEATSMAGEPGLTLTGQLGDVMKESAQIALSYLRSNGRRLGLDPNALAGRRIHLHVPAGAVPKDGPSAGITMVTALASLVSGRPVRPEFGMTGEVTLSGRALPIGGVKQKLLAAHRAGLTEVIIPQRNEPDLDDLPAEVREALTVHTLADVADVLALALRPADLDADSLDGEALATA.

One can recognise a Lon N-terminal domain in the interval 4–187 (LPVLPLTDAV…LLVGWVRAHL (184 aa)). Residue 346–353 (GPPGVGKT) participates in ATP binding. One can recognise a Lon proteolytic domain in the interval 581-762 (TAVPGVATGL…ADVLALALRP (182 aa)). Residues Ser668 and Lys711 contribute to the active site.

It belongs to the peptidase S16 family. In terms of assembly, homohexamer. Organized in a ring with a central cavity.

It is found in the cytoplasm. The catalysed reaction is Hydrolysis of proteins in presence of ATP.. Its function is as follows. ATP-dependent serine protease that mediates the selective degradation of mutant and abnormal proteins as well as certain short-lived regulatory proteins. Required for cellular homeostasis and for survival from DNA damage and developmental changes induced by stress. Degrades polypeptides processively to yield small peptide fragments that are 5 to 10 amino acids long. Binds to DNA in a double-stranded, site-specific manner. This is Lon protease from Salinispora arenicola (strain CNS-205).